Consider the following 166-residue polypeptide: Putative pre-16S rRNA nuclease (166 aa).

This sequence belongs to the YqgF nuclease family.

It is found in the cytoplasm. In terms of biological role, could be a nuclease involved in processing of the 5'-end of pre-16S rRNA. The sequence is that of Putative pre-16S rRNA nuclease from Mesorhizobium japonicum (strain LMG 29417 / CECT 9101 / MAFF 303099) (Mesorhizobium loti (strain MAFF 303099)).